Reading from the N-terminus, the 149-residue chain is Large ribosomal subunit protein uL13 (149 aa).

The protein belongs to the universal ribosomal protein uL13 family. In terms of assembly, part of the 50S ribosomal subunit.

Its function is as follows. This protein is one of the early assembly proteins of the 50S ribosomal subunit, although it is not seen to bind rRNA by itself. It is important during the early stages of 50S assembly. This Chlorobium phaeovibrioides (strain DSM 265 / 1930) (Prosthecochloris vibrioformis (strain DSM 265)) protein is Large ribosomal subunit protein uL13.